The following is a 149-amino-acid chain: Arginine repressor (149 aa).

This sequence belongs to the ArgR family.

It localises to the cytoplasm. It participates in amino-acid biosynthesis; L-arginine biosynthesis [regulation]. Regulates arginine biosynthesis genes. In Geobacillus thermodenitrificans (strain NG80-2), this protein is Arginine repressor.